The chain runs to 103 residues: Small ribosomal subunit protein uS10 (103 aa).

The protein belongs to the universal ribosomal protein uS10 family. In terms of assembly, part of the 30S ribosomal subunit.

In terms of biological role, involved in the binding of tRNA to the ribosomes. This Campylobacter hominis (strain ATCC BAA-381 / DSM 21671 / CCUG 45161 / LMG 19568 / NCTC 13146 / CH001A) protein is Small ribosomal subunit protein uS10.